The sequence spans 475 residues: Ribulose bisphosphate carboxylase large chain (475 aa).

The propeptide occupies 1–2 (MS). Pro3 bears the N-acetylproline mark. The residue at position 14 (Lys14) is an N6,N6,N6-trimethyllysine. 2 residues coordinate substrate: Asn123 and Thr173. The Proton acceptor role is filled by Lys175. Lys177 contacts substrate. Residues Lys201, Asp203, and Glu204 each contribute to the Mg(2+) site. Lys201 is subject to N6-carboxylysine. His294 acts as the Proton acceptor in catalysis. Substrate contacts are provided by Arg295, His327, and Ser379.

Belongs to the RuBisCO large chain family. Type I subfamily. As to quaternary structure, heterohexadecamer of 8 large chains and 8 small chains; disulfide-linked. The disulfide link is formed within the large subunit homodimers. It depends on Mg(2+) as a cofactor. The disulfide bond which can form in the large chain dimeric partners within the hexadecamer appears to be associated with oxidative stress and protein turnover.

The protein resides in the plastid. It localises to the chloroplast. The catalysed reaction is 2 (2R)-3-phosphoglycerate + 2 H(+) = D-ribulose 1,5-bisphosphate + CO2 + H2O. It carries out the reaction D-ribulose 1,5-bisphosphate + O2 = 2-phosphoglycolate + (2R)-3-phosphoglycerate + 2 H(+). Its function is as follows. RuBisCO catalyzes two reactions: the carboxylation of D-ribulose 1,5-bisphosphate, the primary event in carbon dioxide fixation, as well as the oxidative fragmentation of the pentose substrate in the photorespiration process. Both reactions occur simultaneously and in competition at the same active site. The chain is Ribulose bisphosphate carboxylase large chain from Cycas taitungensis (Prince sago).